The primary structure comprises 160 residues: Endoplasmic reticulum transmembrane protein 2 (160 aa).

Topologically, residues 1 to 2 (MG) are lumenal. Residues 3–23 (VYLAVLFSLLVIEMAILFILV) traverse the membrane as a helical segment. Residues 24–45 (LPLPQRMRRWLYIRYSIISTNK) are Cytoplasmic-facing. Residues 46-66 (KFRTYMVGIMIFVGLLFIDSW) traverse the membrane as a helical segment. Over 67 to 103 (KRSQIRVSTYRNQKNPYIINSVTPVDALASRAYNQRN) the chain is Lumenal. The helical transmembrane segment at 104 to 124 (VYISGFIIYFYICILTVMSIL) threads the bilayer. Residues 125-160 (RRIVEWNDKMKAGDDILKEKLRRKQKYLEELQKKKF) lie on the Cytoplasmic side of the membrane. The Di-lysine motif motif lies at 157 to 160 (KKKF).

Belongs to the BCAP29/BCAP31 family.

It is found in the endoplasmic reticulum membrane. May play a role in anterograde transport of membrane proteins from the endoplasmic reticulum to the Golgi. In Saccharomyces cerevisiae (strain ATCC 204508 / S288c) (Baker's yeast), this protein is Endoplasmic reticulum transmembrane protein 2 (YET2).